The chain runs to 98 residues: NADH-ubiquinone oxidoreductase chain 4L (98 aa).

3 helical membrane-spanning segments follow: residues 1–21, 29–49, and 61–81; these read MSLV…GLLM, SLLC…LTIL, and IILL…LVMV.

It belongs to the complex I subunit 4L family. As to quaternary structure, core subunit of respiratory chain NADH dehydrogenase (Complex I) which is composed of 45 different subunits.

It is found in the mitochondrion inner membrane. It catalyses the reaction a ubiquinone + NADH + 5 H(+)(in) = a ubiquinol + NAD(+) + 4 H(+)(out). Core subunit of the mitochondrial membrane respiratory chain NADH dehydrogenase (Complex I) which catalyzes electron transfer from NADH through the respiratory chain, using ubiquinone as an electron acceptor. Part of the enzyme membrane arm which is embedded in the lipid bilayer and involved in proton translocation. The sequence is that of NADH-ubiquinone oxidoreductase chain 4L (MT-ND4L) from Elaphodus cephalophus (Tufted deer).